Reading from the N-terminus, the 454-residue chain is UDP-N-acetylmuramate--L-alanine ligase (454 aa).

Residue glycine 112–threonine 118 participates in ATP binding.

The protein belongs to the MurCDEF family.

It localises to the cytoplasm. It carries out the reaction UDP-N-acetyl-alpha-D-muramate + L-alanine + ATP = UDP-N-acetyl-alpha-D-muramoyl-L-alanine + ADP + phosphate + H(+). The protein operates within cell wall biogenesis; peptidoglycan biosynthesis. Its function is as follows. Cell wall formation. This chain is UDP-N-acetylmuramate--L-alanine ligase, found in Nitratidesulfovibrio vulgaris (strain ATCC 29579 / DSM 644 / CCUG 34227 / NCIMB 8303 / VKM B-1760 / Hildenborough) (Desulfovibrio vulgaris).